The sequence spans 367 residues: Uroporphyrinogen decarboxylase (367 aa).

Methionine 1 carries the post-translational modification N-acetylmethionine. Coproporphyrinogen I-binding residues include arginine 37, alanine 39, arginine 41, arginine 50, aspartate 86, tyrosine 164, serine 219, and histidine 339. Arginine 37, alanine 39, and arginine 41 together coordinate coproporphyrinogen III. Coproporphyrinogen III is bound by residues aspartate 86, tyrosine 164, serine 219, and histidine 339.

It belongs to the uroporphyrinogen decarboxylase family. Homodimer.

The protein localises to the cytoplasm. It localises to the cytosol. The enzyme catalyses uroporphyrinogen III + 4 H(+) = coproporphyrinogen III + 4 CO2. It catalyses the reaction uroporphyrinogen I + 4 H(+) = coproporphyrinogen I + 4 CO2. The protein operates within porphyrin-containing compound metabolism; protoporphyrin-IX biosynthesis; coproporphyrinogen-III from 5-aminolevulinate: step 4/4. Its function is as follows. Catalyzes the sequential decarboxylation of the four acetate side chains of uroporphyrinogen to form coproporphyrinogen and participates in the fifth step in the heme biosynthetic pathway. Isomer I or isomer III of uroporphyrinogen may serve as substrate, but only coproporphyrinogen III can ultimately be converted to heme. In vitro also decarboxylates pentacarboxylate porphyrinogen I. This chain is Uroporphyrinogen decarboxylase, found in Pongo abelii (Sumatran orangutan).